The primary structure comprises 625 residues: Cysteine-rich receptor-like protein kinase 46 (625 aa).

The N-terminal stretch at 1–23 (MASTLISSLAVVLPLTLLAPSMS) is a signal peptide. The Extracellular portion of the chain corresponds to 24–252 (MKISRIDVLG…LLAMSFTKEN (229 aa)). 2 Gnk2-homologous domains span residues 29–130 (IDVL…NYSF) and 135–237 (VSHQ…NYTF). N38, N127, N234, and N252 each carry an N-linked (GlcNAc...) asparagine glycan. The chain crosses the membrane as a helical span at residues 253 to 273 (LTYIFVISMVGVLAIAAGFWC). Over 274–625 (GKCFYMRTSP…TKPPFLHDSM (352 aa)) the chain is Cytoplasmic. The 291-residue stretch at 331–621 (FNESCKLGVG…LPTPTKPPFL (291 aa)) folds into the Protein kinase domain. ATP contacts are provided by residues 337 to 345 (LGVGGYGEV) and K359. Y404 carries the post-translational modification Phosphotyrosine. The active-site Proton acceptor is D454. S458 bears the Phosphoserine mark. Phosphothreonine is present on T499. Y507 is subject to Phosphotyrosine.

This sequence belongs to the protein kinase superfamily. Ser/Thr protein kinase family. CRK subfamily.

It localises to the membrane. The catalysed reaction is L-seryl-[protein] + ATP = O-phospho-L-seryl-[protein] + ADP + H(+). It catalyses the reaction L-threonyl-[protein] + ATP = O-phospho-L-threonyl-[protein] + ADP + H(+). This chain is Cysteine-rich receptor-like protein kinase 46, found in Arabidopsis thaliana (Mouse-ear cress).